The chain runs to 218 residues: Riboflavin kinase (218 aa).

The signal sequence occupies residues 1-19; sequence MFTWTIYVSLLLVLAGTFL. Residues threonine 72 and asparagine 74 each coordinate Mg(2+). The active-site Nucleophile is the glutamate 155.

Belongs to the flavokinase family. Zn(2+) serves as cofactor. Mg(2+) is required as a cofactor.

Its subcellular location is the microsome. It is found in the mitochondrion inner membrane. The protein resides in the endoplasmic reticulum. The enzyme catalyses riboflavin + ATP = FMN + ADP + H(+). Its pathway is cofactor biosynthesis; FMN biosynthesis; FMN from riboflavin (ATP route): step 1/1. In terms of biological role, catalyzes the phosphorylation of riboflavin (vitamin B2) to form flavin mononucleotide (FMN) coenzyme. This Saccharomyces cerevisiae (strain ATCC 204508 / S288c) (Baker's yeast) protein is Riboflavin kinase (FMN1).